The chain runs to 246 residues: Pyridoxine 5'-phosphate synthase (246 aa).

Position 12 (N12) interacts with 3-amino-2-oxopropyl phosphate. 14–15 (DH) serves as a coordination point for 1-deoxy-D-xylulose 5-phosphate. R23 lines the 3-amino-2-oxopropyl phosphate pocket. The active-site Proton acceptor is H48. 1-deoxy-D-xylulose 5-phosphate-binding residues include R50 and H55. E75 serves as the catalytic Proton acceptor. Residue T105 participates in 1-deoxy-D-xylulose 5-phosphate binding. H196 functions as the Proton donor in the catalytic mechanism. 3-amino-2-oxopropyl phosphate is bound by residues G197 and 218–219 (GH).

Belongs to the PNP synthase family. As to quaternary structure, homooctamer; tetramer of dimers.

It localises to the cytoplasm. It catalyses the reaction 3-amino-2-oxopropyl phosphate + 1-deoxy-D-xylulose 5-phosphate = pyridoxine 5'-phosphate + phosphate + 2 H2O + H(+). The protein operates within cofactor biosynthesis; pyridoxine 5'-phosphate biosynthesis; pyridoxine 5'-phosphate from D-erythrose 4-phosphate: step 5/5. Its function is as follows. Catalyzes the complicated ring closure reaction between the two acyclic compounds 1-deoxy-D-xylulose-5-phosphate (DXP) and 3-amino-2-oxopropyl phosphate (1-amino-acetone-3-phosphate or AAP) to form pyridoxine 5'-phosphate (PNP) and inorganic phosphate. The protein is Pyridoxine 5'-phosphate synthase of Pseudomonas putida (strain ATCC 47054 / DSM 6125 / CFBP 8728 / NCIMB 11950 / KT2440).